A 492-amino-acid chain; its full sequence is 2,3-bisphosphoglycerate-independent phosphoglycerate mutase (492 aa).

Residues Asp-11 and Ser-61 each contribute to the Mn(2+) site. Ser-61 functions as the Phosphoserine intermediate in the catalytic mechanism. Substrate is bound by residues His-118, 147–148 (RD), Arg-178, Arg-184, 248–251 (RNDR), and Lys-320. Positions 386, 390, 427, 428, and 445 each coordinate Mn(2+).

The protein belongs to the BPG-independent phosphoglycerate mutase family. As to quaternary structure, monomer. Requires Mn(2+) as cofactor.

It carries out the reaction (2R)-2-phosphoglycerate = (2R)-3-phosphoglycerate. The protein operates within carbohydrate degradation; glycolysis; pyruvate from D-glyceraldehyde 3-phosphate: step 3/5. Functionally, catalyzes the interconversion of 2-phosphoglycerate and 3-phosphoglycerate. This chain is 2,3-bisphosphoglycerate-independent phosphoglycerate mutase, found in Campylobacter jejuni (strain RM1221).